The chain runs to 107 residues: Probable insulin-like peptide beta-type 3 (107 aa).

The signal sequence occupies residues 1–19 (MKLSVVLALFIIFQLGAAS). Positions 20-55 (LMRNWMFDFEKELEHDYDDSEIGFHNIHSLMARSRR) are excised as a propeptide. 4 disulfide bridges follow: cysteine 62–cysteine 90, cysteine 74–cysteine 103, cysteine 78–cysteine 104, and cysteine 89–cysteine 94.

The protein belongs to the insulin family.

It is found in the secreted. This Caenorhabditis elegans protein is Probable insulin-like peptide beta-type 3 (ins-3).